The sequence spans 201 residues: LexA repressor (201 aa).

Residues 28–48 (RAEIAARLGFRSPNAAEEHLK) constitute a DNA-binding region (H-T-H motif). Residues Ser-118 and Lys-155 each act as for autocatalytic cleavage activity in the active site.

Belongs to the peptidase S24 family. As to quaternary structure, homodimer.

It carries out the reaction Hydrolysis of Ala-|-Gly bond in repressor LexA.. Its function is as follows. Represses a number of genes involved in the response to DNA damage (SOS response), including recA and lexA. In the presence of single-stranded DNA, RecA interacts with LexA causing an autocatalytic cleavage which disrupts the DNA-binding part of LexA, leading to derepression of the SOS regulon and eventually DNA repair. The chain is LexA repressor from Photorhabdus laumondii subsp. laumondii (strain DSM 15139 / CIP 105565 / TT01) (Photorhabdus luminescens subsp. laumondii).